Here is a 315-residue protein sequence, read N- to C-terminus: Thymidylate synthase (315 aa).

DUMP is bound by residues R22 and 177-178 (RR). Residue C197 is the Nucleophile of the active site. DUMP is bound by residues 217–220 (RSAD), N228, and 258–260 (HLY). D220 lines the (6R)-5,10-methylene-5,6,7,8-tetrahydrofolate pocket. Residue A314 participates in (6R)-5,10-methylene-5,6,7,8-tetrahydrofolate binding.

This sequence belongs to the thymidylate synthase family. Bacterial-type ThyA subfamily. Homodimer.

The protein localises to the cytoplasm. It carries out the reaction dUMP + (6R)-5,10-methylene-5,6,7,8-tetrahydrofolate = 7,8-dihydrofolate + dTMP. It functions in the pathway pyrimidine metabolism; dTTP biosynthesis. Functionally, catalyzes the reductive methylation of 2'-deoxyuridine-5'-monophosphate (dUMP) to 2'-deoxythymidine-5'-monophosphate (dTMP) while utilizing 5,10-methylenetetrahydrofolate (mTHF) as the methyl donor and reductant in the reaction, yielding dihydrofolate (DHF) as a by-product. This enzymatic reaction provides an intracellular de novo source of dTMP, an essential precursor for DNA biosynthesis. In Enterococcus faecalis (strain ATCC 700802 / V583), this protein is Thymidylate synthase.